The following is a 66-amino-acid chain: Large ribosomal subunit protein bL35 (66 aa).

Belongs to the bacterial ribosomal protein bL35 family.

The chain is Large ribosomal subunit protein bL35 from Thermodesulfovibrio yellowstonii (strain ATCC 51303 / DSM 11347 / YP87).